A 201-amino-acid chain; its full sequence is Adenylyl-sulfate kinase (201 aa).

35-42 (GLSGSGKS) lines the ATP pocket. Ser109 serves as the catalytic Phosphoserine intermediate.

It belongs to the APS kinase family.

It carries out the reaction adenosine 5'-phosphosulfate + ATP = 3'-phosphoadenylyl sulfate + ADP + H(+). The protein operates within sulfur metabolism; hydrogen sulfide biosynthesis; sulfite from sulfate: step 2/3. Functionally, catalyzes the synthesis of activated sulfate. The sequence is that of Adenylyl-sulfate kinase from Salmonella paratyphi C (strain RKS4594).